The following is a 62-amino-acid chain: Large ribosomal subunit protein bL32 (62 aa).

Positions 1-16 are enriched in basic residues; it reads MAVPKRKTSPSRRGMR. Positions 1 to 62 are disordered; it reads MAVPKRKTSP…QILKPKTAEV (62 aa). Basic and acidic residues predominate over residues 28–44; the sequence is VEDKDSGELRRPHHLDL.

Belongs to the bacterial ribosomal protein bL32 family.

In Azorhizobium caulinodans (strain ATCC 43989 / DSM 5975 / JCM 20966 / LMG 6465 / NBRC 14845 / NCIMB 13405 / ORS 571), this protein is Large ribosomal subunit protein bL32.